A 149-amino-acid polypeptide reads, in one-letter code: D-aminoacyl-tRNA deacylase (149 aa).

Residues glycine 137 to proline 138 carry the Gly-cisPro motif, important for rejection of L-amino acids motif.

It belongs to the DTD family. In terms of assembly, homodimer.

The protein resides in the cytoplasm. The catalysed reaction is glycyl-tRNA(Ala) + H2O = tRNA(Ala) + glycine + H(+). The enzyme catalyses a D-aminoacyl-tRNA + H2O = a tRNA + a D-alpha-amino acid + H(+). In terms of biological role, an aminoacyl-tRNA editing enzyme that deacylates mischarged D-aminoacyl-tRNAs. Also deacylates mischarged glycyl-tRNA(Ala), protecting cells against glycine mischarging by AlaRS. Acts via tRNA-based rather than protein-based catalysis; rejects L-amino acids rather than detecting D-amino acids in the active site. By recycling D-aminoacyl-tRNA to D-amino acids and free tRNA molecules, this enzyme counteracts the toxicity associated with the formation of D-aminoacyl-tRNA entities in vivo and helps enforce protein L-homochirality. The protein is D-aminoacyl-tRNA deacylase of Desulforudis audaxviator (strain MP104C).